The following is a 243-amino-acid chain: tRNA (guanine-N(1)-)-methyltransferase (243 aa).

Residues Gly-108 and 127-132 contribute to the S-adenosyl-L-methionine site; that span reads LGDFVL.

It belongs to the RNA methyltransferase TrmD family. As to quaternary structure, homodimer.

Its subcellular location is the cytoplasm. It catalyses the reaction guanosine(37) in tRNA + S-adenosyl-L-methionine = N(1)-methylguanosine(37) in tRNA + S-adenosyl-L-homocysteine + H(+). Specifically methylates guanosine-37 in various tRNAs. In Streptococcus equi subsp. zooepidemicus (strain H70), this protein is tRNA (guanine-N(1)-)-methyltransferase.